Here is a 275-residue protein sequence, read N- to C-terminus: ATP synthase subunit delta (275 aa).

The protein belongs to the ATPase delta chain family. As to quaternary structure, F-type ATPases have 2 components, F(1) - the catalytic core - and F(0) - the membrane proton channel. F(1) has five subunits: alpha(3), beta(3), gamma(1), delta(1), epsilon(1). F(0) has three main subunits: a(1), b(2) and c(10-14). The alpha and beta chains form an alternating ring which encloses part of the gamma chain. F(1) is attached to F(0) by a central stalk formed by the gamma and epsilon chains, while a peripheral stalk is formed by the delta and b chains.

The protein resides in the cell membrane. Its function is as follows. F(1)F(0) ATP synthase produces ATP from ADP in the presence of a proton or sodium gradient. F-type ATPases consist of two structural domains, F(1) containing the extramembraneous catalytic core and F(0) containing the membrane proton channel, linked together by a central stalk and a peripheral stalk. During catalysis, ATP synthesis in the catalytic domain of F(1) is coupled via a rotary mechanism of the central stalk subunits to proton translocation. In terms of biological role, this protein is part of the stalk that links CF(0) to CF(1). It either transmits conformational changes from CF(0) to CF(1) or is implicated in proton conduction. This is ATP synthase subunit delta from Pseudarthrobacter chlorophenolicus (strain ATCC 700700 / DSM 12829 / CIP 107037 / JCM 12360 / KCTC 9906 / NCIMB 13794 / A6) (Arthrobacter chlorophenolicus).